The chain runs to 245 residues: Nodulation protein G (245 aa).

NAD(+) is bound at residue 11 to 35; that stretch reads VTGASGAIGGAIARVLHAQGAIVGL. Serine 139 contributes to the substrate binding site. The active-site Proton acceptor is the tyrosine 152.

This sequence belongs to the short-chain dehydrogenases/reductases (SDR) family.

Its function is as follows. Proposed to modify Nod factor fatty acyl chain. In Rhizobium meliloti (strain 1021) (Ensifer meliloti), this protein is Nodulation protein G (nodG).